Here is a 538-residue protein sequence, read N- to C-terminus: Phosphoenolpyruvate carboxykinase (ATP) (538 aa).

Substrate is bound by residues arginine 64, tyrosine 205, and lysine 211. Residues lysine 211, histidine 230, and glycine 246–threonine 254 contribute to the ATP site. Mn(2+)-binding residues include lysine 211 and histidine 230. Residue aspartate 267 coordinates Mn(2+). ATP-binding positions include glutamate 295, arginine 331, arginine 447–isoleucine 448, and threonine 453. Residue arginine 331 coordinates substrate.

The protein belongs to the phosphoenolpyruvate carboxykinase (ATP) family. As to quaternary structure, monomer. Requires Mn(2+) as cofactor.

Its subcellular location is the cytoplasm. The enzyme catalyses oxaloacetate + ATP = phosphoenolpyruvate + ADP + CO2. Its pathway is carbohydrate biosynthesis; gluconeogenesis. Involved in the gluconeogenesis. Catalyzes the conversion of oxaloacetate (OAA) to phosphoenolpyruvate (PEP) through direct phosphoryl transfer between the nucleoside triphosphate and OAA. This Haemophilus influenzae (strain PittEE) protein is Phosphoenolpyruvate carboxykinase (ATP).